An 81-amino-acid chain; its full sequence is Protein Vpu (81 aa).

Residues 1 to 7 (MSNLLAI) are Extracellular-facing. The helical transmembrane segment at 8 to 28 (GIAALIVALIITIVVWTIAYI) threads the bilayer. Topologically, residues 29–81 (EYKKLVRQRKINRLYKRISERAEDSGNESEGDAEELAALGEVGPFIPGDINNL) are cytoplasmic. 2 positions are modified to phosphoserine; by host CK2: S53 and S57.

This sequence belongs to the HIV-1 VPU protein family. Homopentamer. Interacts with host CD4 and BRTC; these interactions induce proteasomal degradation of CD4. Interacts with host BST2; this interaction leads to the degradation of host BST2. Interacts with host FBXW11. Interacts with host AP1M1; this interaction plays a role in the mistrafficking and subsequent degradation of host BST2. Interacts with host RANBP2; this interaction allows Vpu to down-regulate host BLM sumoylation. Post-translationally, phosphorylated by host CK2. This phosphorylation is necessary for interaction with human BTRC and degradation of CD4.

The protein localises to the host membrane. Ion channel activity is inhibited by hexamethylene amiloride in vitro. In terms of biological role, enhances virion budding by targeting host CD4 and Tetherin/BST2 to proteasome degradation. Degradation of CD4 prevents any unwanted premature interactions between viral Env and its host receptor CD4 in the endoplasmic reticulum. Degradation of antiretroviral protein Tetherin/BST2 is important for virion budding, as BST2 tethers new viral particles to the host cell membrane. Mechanistically, Vpu bridges either CD4 or BST2 to BTRC, a substrate recognition subunit of the Skp1/Cullin/F-box protein E3 ubiquitin ligase, induces their ubiquitination and subsequent proteasomal degradation. The alteration of the E3 ligase specificity by Vpu seems to promote the degradation of host IKBKB, leading to NF-kappa-B down-regulation and subsequent apoptosis. Acts as a viroporin that forms an oligomeric ion channel in membranes. Modulates the host DNA repair mechanisms to promote degradation of nuclear viral cDNA in cells that are already productively infected in order to suppress immune sensing and proviral hyper-integration (superinfection). Manipulates PML-NBs and modulates SUMOylation of host BLM protein thereby enhancing its DNA-end processing activity toward viral unintegrated linear DNA. Also inhibits RAD52-mediated homologous repair of viral cDNA, preventing the generation of dead-end circular forms of single copies of the long terminal repeat and permitting sustained nucleolytic attack. The chain is Protein Vpu from Homo sapiens (Human).